Here is a 442-residue protein sequence, read N- to C-terminus: Trigger factor (442 aa).

Residues 165-250 enclose the PPIase FKBP-type domain; it reads DDRVIIDFEG…LQKVMAPELP (86 aa).

This sequence belongs to the FKBP-type PPIase family. Tig subfamily.

It localises to the cytoplasm. It catalyses the reaction [protein]-peptidylproline (omega=180) = [protein]-peptidylproline (omega=0). Its function is as follows. Involved in protein export. Acts as a chaperone by maintaining the newly synthesized protein in an open conformation. Functions as a peptidyl-prolyl cis-trans isomerase. This Coxiella burnetii (strain CbuG_Q212) (Coxiella burnetii (strain Q212)) protein is Trigger factor.